The following is a 612-amino-acid chain: Elongation factor 4 (612 aa).

Residues 12–194 (SRIRNFSIIA…QIVEKVPAPA (183 aa)) enclose the tr-type G domain. GTP is bound by residues 24–29 (DHGKST) and 141–144 (NKID).

This sequence belongs to the TRAFAC class translation factor GTPase superfamily. Classic translation factor GTPase family. LepA subfamily.

The protein localises to the cell membrane. It carries out the reaction GTP + H2O = GDP + phosphate + H(+). In terms of biological role, required for accurate and efficient protein synthesis under certain stress conditions. May act as a fidelity factor of the translation reaction, by catalyzing a one-codon backward translocation of tRNAs on improperly translocated ribosomes. Back-translocation proceeds from a post-translocation (POST) complex to a pre-translocation (PRE) complex, thus giving elongation factor G a second chance to translocate the tRNAs correctly. Binds to ribosomes in a GTP-dependent manner. In Bacillus pumilus (strain SAFR-032), this protein is Elongation factor 4.